We begin with the raw amino-acid sequence, 302 residues long: N-acetylmuramic acid 6-phosphate etherase (302 aa).

The SIS domain occupies 58–221 (IGKAFLNGGR…STGAMVKTGK (164 aa)). Catalysis depends on Glu86, which acts as the Proton donor. Glu117 is an active-site residue.

It belongs to the GCKR-like family. MurNAc-6-P etherase subfamily. Homodimer.

It catalyses the reaction N-acetyl-D-muramate 6-phosphate + H2O = N-acetyl-D-glucosamine 6-phosphate + (R)-lactate. The protein operates within amino-sugar metabolism; N-acetylmuramate degradation. Specifically catalyzes the cleavage of the D-lactyl ether substituent of MurNAc 6-phosphate, producing GlcNAc 6-phosphate and D-lactate. The sequence is that of N-acetylmuramic acid 6-phosphate etherase from Clostridium botulinum (strain Loch Maree / Type A3).